A 190-amino-acid chain; its full sequence is MGAELCKRICCEFGTTPGEPLKDALGRQVSLRSYDNIPPTSSSDEGEDDDDGEDDDNEERQQKLRLCGSGCGGNDSSSGSHREATHDGSKKNAVRSTFREDKAPKPSKQSKKKKKPSKHHHHQQSSIMQETDDLDEEDTSIYLSPPPVPPVQVVAKRLPRPDTPRTPRQKKISQRPPTPGTKKPAASLPF.

Gly2 carries N-myristoyl glycine; by host lipidation. Residues 27 to 190 form a disordered region; that stretch reads RQVSLRSYDN…TKKPAASLPF (164 aa). Polar residues predominate over residues 30–43; the sequence is SLRSYDNIPPTSSS. The segment covering 44–58 has biased composition (acidic residues); that stretch reads DEGEDDDDGEDDDNE. Residues 80–90 are compositionally biased toward basic and acidic residues; the sequence is SHREATHDGSK. The segment covering 108-123 has biased composition (basic residues); that stretch reads KQSKKKKKPSKHHHHQ. Residues 130 to 139 are compositionally biased toward acidic residues; sequence ETDDLDEEDT.

The protein belongs to the herpesviridae cytoplasmic envelopment protein 3 family. In terms of assembly, interacts with cytoplasmic envelopment protein 2; this interaction is essential for the proper localization of each protein to the assembly complex and thus for the production of infectious virus. Myristoylation and palmitoylation (probably on one or more of the nearby cysteines at the N-terminus) enable membrane-binding and Golgi apparatus-specific targeting and are essential for efficient packaging. Post-translationally, phosphorylated. Phosphorylation does not seem to be required for recycling to the host Golgi apparatus. Packaging is selective for underphosphorylated forms.

It is found in the virion tegument. It localises to the virion membrane. The protein localises to the host cell membrane. The protein resides in the host Golgi apparatus membrane. Plays an important role in the cytoplasmic envelopment of tegument proteins and capsids during the assembly and egress processes. Also participates in viral entry at the fusion step probably by regulating the core fusion machinery. The sequence is that of Cytoplasmic envelopment protein 3 (UL99) from Human cytomegalovirus (strain AD169) (HHV-5).